A 390-amino-acid polypeptide reads, in one-letter code: Transforming growth factor beta-1 proprotein (390 aa).

Positions 1–29 are cleaved as a signal peptide; it reads MPPSGLRLLPLLLPLLWLLMLTPGRPVAG. The tract at residues 30–74 is straightjacket domain; the sequence is LSTCKTIDMELVKRKRIEAIRGQILSKLRLASPPSQGDVPPGPLP. The tract at residues 75-271 is arm domain; it reads EAILALYNST…ATPLERAQHL (197 aa). N-linked (GlcNAc...) asparagine glycans are attached at residues Asn-82, Asn-136, and Asn-176. The segment at 226–252 is bowtie tail; that stretch reads DSKDNTLQVDINGFSSGRRGDLATIHG. Residues 244-246 carry the Cell attachment site motif; sequence RGD. Intrachain disulfides connect Cys-285–Cys-294, Cys-293–Cys-356, Cys-322–Cys-387, and Cys-326–Cys-389.

This sequence belongs to the TGF-beta family. Homodimer; disulfide-linked. Interacts with the serine proteases, HTRA1 and HTRA3: the interaction with either inhibits TGFB1-mediated signaling and the HTRA protease activity is required for this inhibition. May interact with THSD4; this interaction may lead to sequestration by FBN1 microfibril assembly and attenuation of TGFB signaling. Interacts with CD109, DPT and ASPN. Interacts with EFEMP2. Interacts with TSKU; the interaction contributes to regulation of the hair cycle. Interacts with TGFBR3. In terms of assembly, homodimer; disulfide-linked. Interacts with transforming growth factor beta-1 (TGF-beta-1) chain; interaction is non-covalent and maintains TGF-beta-1 in a latent state; each latency-associated peptide (LAP) monomer interacts with TGF-beta-1 in the other monomer. Interacts with LTBP1; leading to regulation of TGF-beta-1 activation. Interacts with LRRC32/GARP; leading to regulation of TGF-beta-1 activation on the surface of activated regulatory T-cells (Tregs). Interacts with LRRC33/NRROS; leading to regulation of TGF-beta-1 activation in macrophages and microglia. Interacts (via cell attachment site) with integrins ITGAV and ITGB6 (ITGAV:ITGB6), leading to release of the active TGF-beta-1. Interacts with NREP; the interaction results in a decrease in TGFB1 autoinduction. Interacts with HSP90AB1; inhibits latent TGFB1 activation. As to quaternary structure, homodimer; disulfide-linked. Interacts with TGF-beta receptors (TGFBR1 and TGFBR2), leading to signal transduction. Interacts with EFEMP2. Transforming growth factor beta-1 proprotein: The precursor proprotein is cleaved in the Golgi apparatus by FURIN to form Transforming growth factor beta-1 (TGF-beta-1) and Latency-associated peptide (LAP) chains, which remain non-covalently linked, rendering TGF-beta-1 inactive. In terms of processing, N-glycosylated. Deglycosylation leads to activation of Transforming growth factor beta-1 (TGF-beta-1); mechanisms triggering deglycosylation-driven activation of TGF-beta-1 are however unclear.

It localises to the secreted. It is found in the extracellular space. The protein resides in the extracellular matrix. Transforming growth factor beta-1 proprotein: Precursor of the Latency-associated peptide (LAP) and Transforming growth factor beta-1 (TGF-beta-1) chains, which constitute the regulatory and active subunit of TGF-beta-1, respectively. Functionally, required to maintain the Transforming growth factor beta-1 (TGF-beta-1) chain in a latent state during storage in extracellular matrix. Associates non-covalently with TGF-beta-1 and regulates its activation via interaction with 'milieu molecules', such as LTBP1, LRRC32/GARP and LRRC33/NRROS, that control activation of TGF-beta-1. Interaction with LRRC33/NRROS regulates activation of TGF-beta-1 in macrophages and microglia. Interaction with LRRC32/GARP controls activation of TGF-beta-1 on the surface of activated regulatory T-cells (Tregs). Interaction with integrins (ITGAV:ITGB6 or ITGAV:ITGB8) results in distortion of the Latency-associated peptide chain and subsequent release of the active TGF-beta-1. In terms of biological role, multifunctional protein that regulates the growth and differentiation of various cell types and is involved in various processes, such as normal development, immune function, microglia function and responses to neurodegeneration. Activation into mature form follows different steps: following cleavage of the proprotein in the Golgi apparatus, Latency-associated peptide (LAP) and Transforming growth factor beta-1 (TGF-beta-1) chains remain non-covalently linked rendering TGF-beta-1 inactive during storage in extracellular matrix. At the same time, LAP chain interacts with 'milieu molecules', such as LTBP1, LRRC32/GARP and LRRC33/NRROS that control activation of TGF-beta-1 and maintain it in a latent state during storage in extracellular milieus. TGF-beta-1 is released from LAP by integrins (ITGAV:ITGB6 or ITGAV:ITGB8): integrin-binding to LAP stabilizes an alternative conformation of the LAP bowtie tail and results in distortion of the LAP chain and subsequent release of the active TGF-beta-1. Once activated following release of LAP, TGF-beta-1 acts by binding to TGF-beta receptors (TGFBR1 and TGFBR2), which transduce signal. While expressed by many cells types, TGF-beta-1 only has a very localized range of action within cell environment thanks to fine regulation of its activation by Latency-associated peptide chain (LAP) and 'milieu molecules'. Plays an important role in bone remodeling: acts as a potent stimulator of osteoblastic bone formation, causing chemotaxis, proliferation and differentiation in committed osteoblasts. Can promote either T-helper 17 cells (Th17) or regulatory T-cells (Treg) lineage differentiation in a concentration-dependent manner. At high concentrations, leads to FOXP3-mediated suppression of RORC and down-regulation of IL-17 expression, favoring Treg cell development. At low concentrations in concert with IL-6 and IL-21, leads to expression of the IL-17 and IL-23 receptors, favoring differentiation to Th17 cells. Stimulates sustained production of collagen through the activation of CREB3L1 by regulated intramembrane proteolysis (RIP). Mediates SMAD2/3 activation by inducing its phosphorylation and subsequent translocation to the nucleus. Positively regulates odontoblastic differentiation in dental papilla cells, via promotion of IPO7-mediated translocation of phosphorylated SMAD2 to the nucleus and subsequent transcription of target genes. Can induce epithelial-to-mesenchymal transition (EMT) and cell migration in various cell types. This Bos taurus (Bovine) protein is Transforming growth factor beta-1 proprotein (TGFB1).